The chain runs to 483 residues: MFS-type transporter hepF (483 aa).

The tract at residues 1–31 (METPAGKADRPRDHDSEQSQDNVVSWEGEDD) is disordered. Residues 7-17 (KADRPRDHDSE) show a composition bias toward basic and acidic residues. 11 consecutive transmembrane segments (helical) span residues 89–109 (TIVVSIFVLGLAFGPLLAAPI), 124–144 (ILYTIFTVACGVSTNISMLIV), 147–167 (FFAGVTGSAPLTIGGGTVADL), 179–199 (FVTLGQAVAPAIGPVAGGFLT), 206–226 (WVFWLLTIVNGTITICQILFT), 276–296 (PISLIVALCCAVIYGILYVLV), 311–331 (IGISGLGYLGLGIGNLVGLWI), 357–377 (PMMILSGPVIAAGLFWYGWSV), 385–405 (MPIVGSGIVGLGNMFFFMPMV), 416–436 (AASAIAANAVLRSIGGAVLPL), and 448–468 (GWGNSILAFMALVFNPLLIAI).

Belongs to the major facilitator superfamily.

The protein resides in the cell membrane. In terms of biological role, MFS-type transporter; part of the gene cluster that mediates the biosynthesis of heptelidic acid (HA), a sesquiterpene lactone that acts as an inhibitor of glyceraldehyde-3-phosphatedehydrogenase (GAPDH) and a growth inhibitor of the salt-tolerant lactic acid bacteria in soy sauce brewing. Might be required for efficient secretion of heptelidic acid. In Aspergillus oryzae (strain ATCC 42149 / RIB 40) (Yellow koji mold), this protein is MFS-type transporter hepF (hepF).